A 366-amino-acid chain; its full sequence is MWPPSHRQLCLAFLLVCVLSVISFFLHIHQDSFPHGLGLSILCPDRGLVTPPVAIFCLPGTAMGPNASSSCPQHPASLSGTWTVYPNGRFGNQMGQYATLLALAQLNGRRAFILPAMHAALAPVFRITLPVLAPEADSRTPWRELQLHDWMSEEYADLRDPFLKLSGFPCSWTFFHHLREQIRREFTLHDHLREEAQSVLGQLRLGRTGDRPRTFVGVHVRRGDYLQVMPQRWKGVVGDSAYLRQAMDWFRARHEAPVFVVTSNGMEWCKENIDTSQGDVTFAGDGQEATPWKDFALLTQCNHTIMTIGTFGFWAAYLAGGDTVYLANFTLPDSEFLKIFKPEAAFLPEWVGINADLSSLWTLAKP.

Topologically, residues 1-8 (MWPPSHRQ) are cytoplasmic. A helical; Signal-anchor for type II membrane protein membrane pass occupies residues 9-25 (LCLAFLLVCVLSVISFF). Residues 26–366 (LHIHQDSFPH…LSSLWTLAKP (341 aa)) are Lumenal-facing. 3 N-linked (GlcNAc...) asparagine glycosylation sites follow: N66, N302, and N328.

The protein belongs to the glycosyltransferase 11 family.

The protein resides in the golgi apparatus. Its subcellular location is the golgi stack membrane. It catalyses the reaction a beta-D-galactosyl-(1-&gt;4)-N-acetyl-beta-D-glucosaminyl derivative + GDP-beta-L-fucose = an alpha-L-Fuc-(1-&gt;2)-beta-D-Gal-(1-&gt;4)-beta-D-GlcNAc derivative + GDP + H(+). It carries out the reaction a ganglioside GA1 + GDP-beta-L-fucose = a ganglioside Fuc-GA1 + GDP + H(+). The enzyme catalyses a beta-D-Gal-(1-&gt;3)-beta-D-GlcNAc-(1-&gt;3)-beta-D-Gal-(1-&gt;4)-beta-D-Glc-(1&lt;-&gt;1')-Cer(d18:1(4E)) + GDP-beta-L-fucose = alpha-L-fucosyl-(1-&gt;2)- beta-D-galactosyl-(1-&gt;3)-N-acetyl-beta-D-glucosaminyl-(1-&gt;3)-beta-D-galactosyl-(1-&gt;4)-beta-D-glucosyl-(1&lt;-&gt;1')-N-acylsphing-4-enine + GDP + H(+). The catalysed reaction is a neolactoside nLc4Cer(d18:1(4E)) + GDP-beta-L-fucose = a neolactoside IV(2)-alpha-Fuc-nLc4Cer(d18:1(4E)) + GDP + H(+). It catalyses the reaction a ganglioside GM1 + GDP-beta-L-fucose = a ganglioside Fuc-GM1 + GDP + H(+). It carries out the reaction beta-D-galactosyl-(1-&gt;3)-N-acetyl-D-galactosamine + GDP-beta-L-fucose = alpha-L-fucosyl-(1-&gt;2)-beta-D-galactosyl-(1-&gt;3)-N-acetyl-D-galactosamine + GDP + H(+). Its pathway is protein modification; protein glycosylation. Functionally, catalyzes the transfer of L-fucose, from a guanosine diphosphate-beta-L-fucose, to the terminal galactose residue of glycoconjugates through an alpha(1,2) linkage leading to H antigen synthesis that is an intermediate substrate in the synthesis of ABO blood group antigens. H antigen is essential for maturation of the glomerular layer of the main olfactory bulb, in cell migration and early cell-cell contacts during tumor associated angiogenesis. Preferentially fucosylates soluble lactose and to a lesser extent fucosylates glycolipids gangliosides GA1 and GM1a. This chain is Galactoside alpha-(1,2)-fucosyltransferase 1, found in Pan troglodytes (Chimpanzee).